Here is a 158-residue protein sequence, read N- to C-terminus: Superoxide dismutase [Cu-Zn] (158 aa).

The Cu cation site is built by His46, His48, and His63. Cysteines 57 and 149 form a disulfide. Residues His63, His71, His80, and Asp83 each contribute to the Zn(2+) site. Residue His120 coordinates Cu cation.

The protein belongs to the Cu-Zn superoxide dismutase family. In terms of assembly, homodimer. It depends on Cu cation as a cofactor. Zn(2+) serves as cofactor.

It localises to the cytoplasm. It carries out the reaction 2 superoxide + 2 H(+) = H2O2 + O2. Its function is as follows. Destroys radicals which are normally produced within the cells and which are toxic to biological systems. This is Superoxide dismutase [Cu-Zn] (SODC) from Brugia pahangi (Filarial nematode worm).